The chain runs to 801 residues: Sucrose synthase isoform 2 (801 aa).

The tract at residues 271-748 (MIFNVVILSP…GLKRIQEKYT (478 aa)) is GT-B glycosyltransferase.

It belongs to the glycosyltransferase 1 family. Plant sucrose synthase subfamily. As to quaternary structure, homotetramer. Exclusively expressed in flowers.

It catalyses the reaction an NDP-alpha-D-glucose + D-fructose = a ribonucleoside 5'-diphosphate + sucrose + H(+). Sucrose-cleaving enzyme that provides UDP-glucose and fructose for various metabolic pathways. The protein is Sucrose synthase isoform 2 of Daucus carota (Wild carrot).